The primary structure comprises 338 residues: Aspartate carbamoyltransferase catalytic subunit (338 aa).

Carbamoyl phosphate-binding residues include Arg59 and Thr60. Lys87 lines the L-aspartate pocket. Carbamoyl phosphate-binding residues include Arg109, His142, and Gln145. L-aspartate-binding residues include Arg182 and Arg253. Carbamoyl phosphate is bound by residues Gly294 and Pro295.

Belongs to the aspartate/ornithine carbamoyltransferase superfamily. ATCase family. As to quaternary structure, heterododecamer (2C3:3R2) of six catalytic PyrB chains organized as two trimers (C3), and six regulatory PyrI chains organized as three dimers (R2).

The catalysed reaction is carbamoyl phosphate + L-aspartate = N-carbamoyl-L-aspartate + phosphate + H(+). The protein operates within pyrimidine metabolism; UMP biosynthesis via de novo pathway; (S)-dihydroorotate from bicarbonate: step 2/3. Catalyzes the condensation of carbamoyl phosphate and aspartate to form carbamoyl aspartate and inorganic phosphate, the committed step in the de novo pyrimidine nucleotide biosynthesis pathway. This is Aspartate carbamoyltransferase catalytic subunit from Prochlorococcus marinus subsp. pastoris (strain CCMP1986 / NIES-2087 / MED4).